The following is a 588-amino-acid chain: Arginine--tRNA ligase (588 aa).

The 'HIGH' region signature appears at 129-139; it reads PNIAKEMHVGH.

Belongs to the class-I aminoacyl-tRNA synthetase family. As to quaternary structure, monomer.

The protein resides in the cytoplasm. The catalysed reaction is tRNA(Arg) + L-arginine + ATP = L-arginyl-tRNA(Arg) + AMP + diphosphate. In Frankia casuarinae (strain DSM 45818 / CECT 9043 / HFP020203 / CcI3), this protein is Arginine--tRNA ligase.